Reading from the N-terminus, the 451-residue chain is Exodeoxyribonuclease 7 large subunit (451 aa).

It belongs to the XseA family. In terms of assembly, heterooligomer composed of large and small subunits.

It is found in the cytoplasm. It catalyses the reaction Exonucleolytic cleavage in either 5'- to 3'- or 3'- to 5'-direction to yield nucleoside 5'-phosphates.. Functionally, bidirectionally degrades single-stranded DNA into large acid-insoluble oligonucleotides, which are then degraded further into small acid-soluble oligonucleotides. This is Exodeoxyribonuclease 7 large subunit from Neisseria meningitidis serogroup A / serotype 4A (strain DSM 15465 / Z2491).